The chain runs to 705 residues: uncharacterized protein (705 aa).

Residues 24–52 (CHFCRVRKLKCDRVRPFCGSCSSRNRKQC) constitute a DNA-binding region (zn(2)-C6 fungal-type).

It is found in the nucleus. This is an uncharacterized protein from Saccharomyces cerevisiae (strain ATCC 204508 / S288c) (Baker's yeast).